Here is a 463-residue protein sequence, read N- to C-terminus: Chromosomal replication initiator protein DnaA (463 aa).

The segment at 1–83 (MSTNQIILTD…LQLFQHYNNT (83 aa)) is domain I, interacts with DnaA modulators. A domain II region spans residues 83–124 (TIKSIEIITKELPGTTQTVTELPTKTFADIGSSELNSENIFS). The segment at 125–343 (TLDVRFTFDN…GALNKVIAHS (219 aa)) is domain III, AAA+ region. ATP contacts are provided by G171, G173, K174, and T175. Residues 344–463 (NFTLKEITLE…INLLMKILQN (120 aa)) are domain IV, binds dsDNA.

This sequence belongs to the DnaA family. Oligomerizes as a right-handed, spiral filament on DNA at oriC.

Its subcellular location is the cytoplasm. Its function is as follows. Plays an essential role in the initiation and regulation of chromosomal replication. ATP-DnaA binds to the origin of replication (oriC) to initiate formation of the DNA replication initiation complex once per cell cycle. Binds the DnaA box (a 9 base pair repeat at the origin) and separates the double-stranded (ds)DNA. Forms a right-handed helical filament on oriC DNA; dsDNA binds to the exterior of the filament while single-stranded (ss)DNA is stabiized in the filament's interior. The ATP-DnaA-oriC complex binds and stabilizes one strand of the AT-rich DNA unwinding element (DUE), permitting loading of DNA polymerase. After initiation quickly degrades to an ADP-DnaA complex that is not apt for DNA replication. Binds acidic phospholipids. This is Chromosomal replication initiator protein DnaA from Rickettsia conorii (strain ATCC VR-613 / Malish 7).